The following is a 310-amino-acid chain: Alpha/beta hydrolase domain-containing protein 17A (310 aa).

The disordered stretch occupies residues 38–61 (VPEPEPGPGGAGAAPSGPLRTSAA). Catalysis depends on charge relay system residues serine 190, aspartate 255, and histidine 284. A Phosphoserine modification is found at serine 307.

This sequence belongs to the AB hydrolase superfamily. ABHD17 family. In terms of processing, palmitoylated on cysteine residues located in a cysteine cluster at the N-terminus which promotes membrane localization. Palmitoylation is required for post-synaptic localization and for depalmitoylating activity towards DLG4/PSD95.

Its subcellular location is the cell membrane. It is found in the endosome membrane. It localises to the cell projection. The protein localises to the dendritic spine. The protein resides in the postsynaptic density membrane. The enzyme catalyses S-hexadecanoyl-L-cysteinyl-[protein] + H2O = L-cysteinyl-[protein] + hexadecanoate + H(+). Its function is as follows. Hydrolyzes fatty acids from S-acylated cysteine residues in proteins. Has depalmitoylating activity towards NRAS. Has depalmitoylating activity towards DLG4/PSD95. May have depalmitoylating activity towars MAP6. The chain is Alpha/beta hydrolase domain-containing protein 17A from Mus musculus (Mouse).